Consider the following 201-residue polypeptide: L(+)-tartrate dehydratase subunit beta (201 aa).

The active site involves His37.

Belongs to the class-I fumarase family. As to quaternary structure, heterotetramer of two alpha and two beta subunits.

It carries out the reaction (2R,3R)-tartrate = oxaloacetate + H2O. The protein is L(+)-tartrate dehydratase subunit beta (ttdB) of Shigella boydii serotype 4 (strain Sb227).